Reading from the N-terminus, the 795-residue chain is MKFSELWLREWVNPAISSETLSDQITMIGLEVDGVEAVAGQFHGVVVGEVVQCAQHPNADKLRVTKVNVGGERLLDIVCGAPNCRLGLKVAVATVGAVLPGDFKIKAAKLRGEPSEGMLCSFSELGISEDHDGIIELPIDAPLGVDLREYLKLDDKVIEISITPNRADCLSIIGVARDVAVANKMPLSEPQIEAVKPTTDAIFPIRVEATEACPRYLGRVIKNINVKAATPQWMREKLRRGGIRSIDPIVDVTNYVLLELGQPLHAFDLERLNGSITVRMAKQDEKLVLLDGTEANLSTDTLVISDEKQAVAMAGIFGGEHSGVNEETQNILLECAFFAPLAIAGRARRYGLHTDASHRYERGVDPQLQHKAIERTTQLLIDICGGEAGPIIDVTDESQLPQSATITLRREKLDRLIGHYIPDEQVGDILTHLGCKVTIQENCWQAVAPSWRFDVEIEEDLVEEVARIYGYNNIPDVPIRADLIMKKHRETDLSLQRVKTVLVDRGYQEAITYSFVDPKIQALLHPQQQALMLPNPISADMSAMRLSLLTGLLTTVVYNQNRQQNRVRLFETGLRFVPDENADQGIRQELMLGGVITGNRFEEHWSLEKQSVDFFDMKGDLEAVLELTGKLSKISFRADVNPALHPGQSAGIYLENEYIGYIGVVHPELERKLDLNGRTVVFEVLWNKLASRVVPDAKEISRFPSNRRDIAIVVPENVAVEDVLAECKKVGVNHIVGINLFDVYCGKGVAEGHKSLAISFILQDTARTLEEEEIAATINKCVAVLKQRFQASLRD.

In terms of domain architecture, tRNA-binding spans 39–148 (AGQFHGVVVG…IDAPLGVDLR (110 aa)). One can recognise a B5 domain in the interval 401–476 (PQSATITLRR…RIYGYNNIPD (76 aa)). Mg(2+) is bound by residues aspartate 454, aspartate 460, glutamate 463, and glutamate 464. An FDX-ACB domain is found at 701–794 (SRFPSNRRDI…LKQRFQASLR (94 aa)).

The protein belongs to the phenylalanyl-tRNA synthetase beta subunit family. Type 1 subfamily. As to quaternary structure, tetramer of two alpha and two beta subunits. Mg(2+) is required as a cofactor.

It is found in the cytoplasm. The enzyme catalyses tRNA(Phe) + L-phenylalanine + ATP = L-phenylalanyl-tRNA(Phe) + AMP + diphosphate + H(+). This Photorhabdus laumondii subsp. laumondii (strain DSM 15139 / CIP 105565 / TT01) (Photorhabdus luminescens subsp. laumondii) protein is Phenylalanine--tRNA ligase beta subunit.